A 323-amino-acid polypeptide reads, in one-letter code: Sphingolipid delta(4)-desaturase DES1 (323 aa).

G2 carries the N-myristoyl glycine lipid modification. Helical transmembrane passes span 41-61 and 68-88; these read PNLIWIIIMMVLTQLGAFYIV and WVIFGAYAFGSCINHSMTLAI. A Histidine box-1 motif is present at residues 89–93; the sequence is HEIAH. Residues 102–122 form a helical membrane-spanning segment; the sequence is AMWNRWFGMFANLPIGIPYSI. Positions 128–132 match the Histidine box-2 motif; it reads HMDHH. Helical transmembrane passes span 152–172, 184–204, and 209–229; these read FFCTAFRKFIWVILQPLFYAF, YLEVINTVAQVTFDILIYYFL, and LVYMLAASLLGLGLHPISGHF. The Histidine box-3 motif lies at 259-263; the sequence is HNEHH. The residue at position 307 (S307) is a Phosphoserine.

This sequence belongs to the fatty acid desaturase type 1 family. DEGS subfamily. As to quaternary structure, interacts with RLBP1; the interaction increases synthesis of chromophore-precursors by DEGS1. Post-translationally, myristoylation can target the enzyme to the mitochondria leading to an increase in ceramide levels. As to expression, ubiquitous.

It is found in the mitochondrion membrane. It localises to the endoplasmic reticulum membrane. It catalyses the reaction an N-acylsphinganine + 2 Fe(II)-[cytochrome b5] + O2 + 2 H(+) = an N-acylsphing-4-enine + 2 Fe(III)-[cytochrome b5] + 2 H2O. The catalysed reaction is all-trans-retinol = 11-cis-retinol. The enzyme catalyses all-trans-retinol = 9-cis-retinol. It carries out the reaction all-trans-retinol = 13-cis-retinol. It catalyses the reaction 11-cis-retinol = 13-cis-retinol. The catalysed reaction is 11-cis-retinol = 9-cis-retinol. Its function is as follows. Has sphingolipid-delta-4-desaturase activity. Converts D-erythro-sphinganine to D-erythro-sphingosine (E-sphing-4-enine). Catalyzes the equilibrium isomerization of retinols. This chain is Sphingolipid delta(4)-desaturase DES1, found in Homo sapiens (Human).